We begin with the raw amino-acid sequence, 160 residues long: Transcription elongation factor GreA (160 aa).

A coiled-coil region spans residues 1–72 (MAEKTYPMTL…QISSLETKIR (72 aa)).

Belongs to the GreA/GreB family.

Functionally, necessary for efficient RNA polymerase transcription elongation past template-encoded arresting sites. The arresting sites in DNA have the property of trapping a certain fraction of elongating RNA polymerases that pass through, resulting in locked ternary complexes. Cleavage of the nascent transcript by cleavage factors such as GreA or GreB allows the resumption of elongation from the new 3'terminus. GreA releases sequences of 2 to 3 nucleotides. The chain is Transcription elongation factor GreA from Streptococcus pneumoniae (strain ATCC 700669 / Spain 23F-1).